We begin with the raw amino-acid sequence, 364 residues long: Dihydroorotate dehydrogenase (quinone) (364 aa).

Residues 62 to 66 (AGFDK) and Thr86 contribute to the FMN site. Lys66 is a binding site for substrate. 111 to 115 (NRMGF) contacts substrate. The FMN site is built by Asn142 and Asn175. Asn175 is a substrate binding site. Ser178 (nucleophile) is an active-site residue. A substrate-binding site is contributed by Asn180. Lys216 and Thr244 together coordinate FMN. Residue 245–246 (NT) coordinates substrate. Residues Gly267, Gly296, and 317 to 318 (YT) contribute to the FMN site.

The protein belongs to the dihydroorotate dehydrogenase family. Type 2 subfamily. As to quaternary structure, monomer. FMN serves as cofactor.

The protein localises to the cell membrane. It carries out the reaction (S)-dihydroorotate + a quinone = orotate + a quinol. Its pathway is pyrimidine metabolism; UMP biosynthesis via de novo pathway; orotate from (S)-dihydroorotate (quinone route): step 1/1. Its function is as follows. Catalyzes the conversion of dihydroorotate to orotate with quinone as electron acceptor. The polypeptide is Dihydroorotate dehydrogenase (quinone) (Anaeromyxobacter sp. (strain K)).